A 599-amino-acid polypeptide reads, in one-letter code: Calmodulin-binding protein 60 E (599 aa).

Positions 1–21 are disordered; it reads MNKRGYECSQEDTDKLPESKR. The segment at 1 to 80 is calmodulin-binding; that stretch reads MNKRGYECSQ…LTSRSPEPKR (80 aa). Residues 150–273 are DNA-binding; the sequence is EDDEDWTREH…VLHKKLLKAN (124 aa).

Belongs to the plant ACBP60 protein family. As to quaternary structure, interacts with calmodulin (CaM).

It is found in the nucleus. In terms of biological role, transcription activator that binds DNA in a sequence-specific manner, likely 5'-GAAATTTTGG-3', to promote the expression of target genes. The sequence is that of Calmodulin-binding protein 60 E from Arabidopsis thaliana (Mouse-ear cress).